Reading from the N-terminus, the 495-residue chain is MELGVLLLLTFTVGFLLLLASQNRPKTHGHLPPGPRPLPFLGNLLQMNRRGLLRSFMQLQEKYGDVFTVHLGPRPVVILCGTDTIREALVDQAEAFSGRGTVAVLHPVVQGYGVIFANGERWKILRRFSLVTMRNFGMGKRSVEERIKEEAQCLVEELKKYKGALLNPTSIFQSIAANIICSIVFGERFDYKDHQFLRLLDLIYQTFSLMGSLSSQVFELFSGFLKYFPGVHKQISKNLQEILNYIDHSVEKHRATLDPNTPRDFINTYLLRMEKEKSNHHTEFHHQNLVISVLSLFFTGTETTSTTLRYSFLIMLKYPHVAEKVQKEIDQVIGSHRLPTLDDRTKMPYTDAVIHEIQRFADLIPIGLPHRVTNDTMFLGYLLPKNTEVYPILSSALHDPRYFDHPDTFNPEHFLDVNGTLKKSEAFLPFSTGKRICLGEGIAQNELFIFFTAILQNFSLASPVAPEDIDLSPINSGISKIPSPYQIHFLSRCVG.

S129 carries the phosphoserine; by PKA modification. C437 lines the heme pocket.

This sequence belongs to the cytochrome P450 family. Heme serves as cofactor.

The protein localises to the endoplasmic reticulum membrane. The protein resides in the microsome membrane. The catalysed reaction is an organic molecule + reduced [NADPH--hemoprotein reductase] + O2 = an alcohol + oxidized [NADPH--hemoprotein reductase] + H2O + H(+). Cytochromes P450 are a group of heme-thiolate monooxygenases. In liver microsomes, this enzyme is involved in an NADPH-dependent electron transport pathway. It oxidizes a variety of structurally unrelated compounds, including steroids, fatty acids, and xenobiotics. The protein is Cytochrome P450 2B15 (Cyp2b15) of Rattus norvegicus (Rat).